The following is a 1104-amino-acid chain: Carbamoyl phosphate synthase large chain (1104 aa).

The segment at Met1 to Glu403 is carboxyphosphate synthetic domain. Positions 129, 170, 176, 177, 209, 211, 216, 242, 243, 244, 286, and 300 each coordinate ATP. The ATP-grasp 1 domain occupies Asn133–Val329. Mg(2+) is bound by residues Gln286, Glu300, and Asn302. Positions 286, 300, and 302 each coordinate Mn(2+). Positions Thr404–Val552 are oligomerization domain. The segment at Ile553–Gly966 is carbamoyl phosphate synthetic domain. An ATP-grasp 2 domain is found at Glu703–Ser900. The ATP site is built by Arg739, Lys778, Leu780, Glu785, Gly811, Ile812, His813, Ser814, Gln854, and Glu871. 3 residues coordinate Mg(2+): Gln854, Glu871, and Asn873. Mn(2+) is bound by residues Gln854, Glu871, and Asn873. Residues Glu967 to Phe1104 enclose the MGS-like domain. Residues Glu967–Phe1104 form an allosteric domain region.

This sequence belongs to the CarB family. In terms of assembly, composed of two chains; the small (or glutamine) chain promotes the hydrolysis of glutamine to ammonia, which is used by the large (or ammonia) chain to synthesize carbamoyl phosphate. Tetramer of heterodimers (alpha,beta)4. Requires Mg(2+) as cofactor. The cofactor is Mn(2+).

It carries out the reaction hydrogencarbonate + L-glutamine + 2 ATP + H2O = carbamoyl phosphate + L-glutamate + 2 ADP + phosphate + 2 H(+). The catalysed reaction is hydrogencarbonate + NH4(+) + 2 ATP = carbamoyl phosphate + 2 ADP + phosphate + 2 H(+). The protein operates within amino-acid biosynthesis; L-arginine biosynthesis; carbamoyl phosphate from bicarbonate: step 1/1. It functions in the pathway pyrimidine metabolism; UMP biosynthesis via de novo pathway; (S)-dihydroorotate from bicarbonate: step 1/3. Large subunit of the glutamine-dependent carbamoyl phosphate synthetase (CPSase). CPSase catalyzes the formation of carbamoyl phosphate from the ammonia moiety of glutamine, carbonate, and phosphate donated by ATP, constituting the first step of 2 biosynthetic pathways, one leading to arginine and/or urea and the other to pyrimidine nucleotides. The large subunit (synthetase) binds the substrates ammonia (free or transferred from glutamine from the small subunit), hydrogencarbonate and ATP and carries out an ATP-coupled ligase reaction, activating hydrogencarbonate by forming carboxy phosphate which reacts with ammonia to form carbamoyl phosphate. This Nostoc sp. (strain PCC 7120 / SAG 25.82 / UTEX 2576) protein is Carbamoyl phosphate synthase large chain.